Consider the following 360-residue polypeptide: DNA integrity scanning protein DisA (360 aa).

Positions 9–147 constitute a DAC domain; it reads DNDLMDILNI…NNIKYVLRDS (139 aa). Residues Gly76, Leu94, and 107 to 111 contribute to the ATP site; that span reads TRHRT.

It belongs to the DisA family. Homooctamer. The cofactor is Mg(2+).

It carries out the reaction 2 ATP = 3',3'-c-di-AMP + 2 diphosphate. Functionally, participates in a DNA-damage check-point that is active prior to asymmetric division when DNA is damaged. DisA forms globular foci that rapidly scan along the chromosomes during sporulation, searching for lesions. When a lesion is present, DisA pauses at the lesion site. This triggers a cellular response that culminates in a temporary block in sporulation initiation. In terms of biological role, also has diadenylate cyclase activity, catalyzing the condensation of 2 ATP molecules into cyclic di-AMP (c-di-AMP). c-di-AMP acts as a signaling molecule that couples DNA integrity with progression of sporulation. The rise in c-di-AMP level generated by DisA while scanning the chromosome, operates as a positive signal that advances sporulation; upon encountering a lesion, the DisA focus arrests at the damaged site and halts c-di-AMP synthesis. In Clostridium tetani (strain Massachusetts / E88), this protein is DNA integrity scanning protein DisA.